The primary structure comprises 2357 residues: Protein transport protein Sec16A (2357 aa).

2 disordered regions span residues 1–25 and 57–303; these read MQPP…RSVF and FSRQ…STFR. Composition is skewed to low complexity over residues 64–76 and 210–227; these read STPL…SSPP and QMPG…PSGQ. Residues 285-303 are compositionally biased toward polar residues; that stretch reads HLQSGSHLANNSDPESTFR. Residues S296, S314, and S331 each carry the phosphoserine modification. Disordered regions lie at residues 335 to 359, 508 to 540, 553 to 603, 758 to 828, 924 to 987, 1006 to 1038, and 1059 to 1151; these read NPLA…GSGC, APDA…ARPQ, KPED…TGIF, VQPP…NPPV, LLVQ…SSHQ, VNVY…PNLD, and QELV…APGP. The span at 520-536 shows a compositional bias: low complexity; the sequence is SVSSSYSSRSHGRLSGS. Residues S559, S569, S587, S589, and S592 each carry the phosphoserine modification. T593 bears the Phosphothreonine mark. The residue at position 595 (S595) is a Phosphoserine. Polar residues-rich tracts occupy residues 766–778 and 803–825; these read SGQQ…SAAP and LQSQ…SLQN. Positions 1006–1028 are enriched in polar residues; that stretch reads VNVYNPSHSDSLASQQSVASHPR. The interval 1019–1890 is required for localization to endoplasmic reticulum exit sites; the sequence is SQQSVASHPR…QQVERQIKEG (872 aa). Position 1069 is a phosphoserine (S1069). Positions 1080 to 1101 are enriched in polar residues; sequence ELSNPESLPAQGQAQNSAQSPA. Residues 1101 to 1400 are interaction with MIA3; sequence ASLVLVDAGQ…EAPLPPGSFH (300 aa). The tract at residues 1102–1405 is required for endoplasmic reticulum localization; that stretch reads SLVLVDAGQQ…PGSFHGDFAY (304 aa). Over residues 1118-1131 the composition is skewed to low complexity; the sequence is QSSSVSLVSSGSGQ. Residues 1138–1151 are compositionally biased toward pro residues; sequence QPWPQPVPALAPGP. Phosphoserine is present on residues S1207, S1229, and S1305. The interval 1215 to 1248 is disordered; that stretch reads YPEPERPSSRASHSSERPPPRQGYPEGYYSSKSG. Residues 1216-1233 are compositionally biased toward basic and acidic residues; sequence PEPERPSSRASHSSERPP. Residues 1307 to 1322 show a composition bias toward basic and acidic residues; sequence FGDRPEKRDNNWRYDP. Residues 1307–1378 are disordered; the sequence is FGDRPEKRDN…SLSSHSHQSQ (72 aa). T1325 is modified (phosphothreonine). S1327, S1347, S1350, S1356, S1359, S1362, S1369, S1573, and S1601 each carry phosphoserine. The segment covering 1333–1354 has biased composition (basic and acidic residues); sequence DPHRDPYGEEVDRRSVHSEHSA. Residues 1356–1375 show a composition bias toward low complexity; it reads SLHSAHSLASRRSSLSSHSH. The interval 1434–1890 is central conserved domain (CCD); mediates interaction with RNF183, LRRK2 and SEC13; it reads QVSSRPTSPE…QQVERQIKEG (457 aa). Position 1907 is a phosphothreonine (T1907). Residues S1939, S1964, S2022, and S2042 each carry the phosphoserine modification. Disordered stretches follow at residues 2049–2110, 2141–2181, and 2226–2328; these read KFAN…SWFF, VNLN…PVNM, and NLFV…MPFY. T2054 bears the Phosphothreonine mark. Phosphoserine occurs at positions 2056, 2073, and 2083. Basic and acidic residues predominate over residues 2087-2106; the sequence is ETKRPGQAAKKETKEPKKGE. The required for interaction with SEC23A stretch occupies residues 2106 to 2357; that stretch reads ESWFFRWLPG…IGQRKHLVLN (252 aa). Phosphoserine occurs at positions 2271 and 2291. Composition is skewed to low complexity over residues 2289-2302 and 2310-2324; these read ELSR…LSRE and APGD…PSGA.

This sequence belongs to the SEC16 family. As to quaternary structure, SEC16A and SEC16B are each present in multiple copies in a heteromeric complex. Interacts with SEC23A. Interacts with RNF183 and RNF152. Interacts with LRRK2 (via ROC domain). Interacts with SEC13. Interacts with RAB10. Interacts with MIA3. Interacts with GORASP2 in response to ER stress. As to expression, ubiquitous. Expressed at higher levels in the pancreas.

It is found in the endoplasmic reticulum membrane. Its subcellular location is the golgi apparatus membrane. The protein resides in the cytoplasm. The protein localises to the perinuclear region. It localises to the cytosol. It is found in the microsome membrane. Its function is as follows. Acts as a molecular scaffold that plays a key role in the organization of the endoplasmic reticulum exit sites (ERES), also known as transitional endoplasmic reticulum (tER). SAR1A-GTP-dependent assembly of SEC16A on the ER membrane forms an organized scaffold defining an ERES. Required for secretory cargo traffic from the endoplasmic reticulum to the Golgi apparatus. Mediates the recruitment of MIA3/TANGO to ERES. Regulates both conventional (ER/Golgi-dependent) and GORASP2-mediated unconventional (ER/Golgi-independent) trafficking of CFTR to cell membrane. Positively regulates the protein stability of E3 ubiquitin-protein ligases RNF152 and RNF183 and the ER localization of RNF183. Acts as a RAB10 effector in the regulation of insulin-induced SLC2A4/GLUT4 glucose transporter-enriched vesicles delivery to the cell membrane in adipocytes. This is Protein transport protein Sec16A (SEC16A) from Homo sapiens (Human).